We begin with the raw amino-acid sequence, 557 residues long: MVEVQDLEPLSPIQDYDEDDLEEDVDEFERFGEEISYDDLKKRMWKDRNLMCKLKQQKRDNLNSVISSPSSSTSASSSSSSSVIVRRTEASRRKKMARSQDSVLKYMMKIMEVCKAQGFVYGIVPEKGKPVTGSSDSLRRWWKENVQFDQTAPNAVSDYLTLAAAQLISSNESLDPNSYIHMLHELQDTTLGSLLSALMQHCVPPQRRFPLEKGLAPPWWPNGTELWWGEQGAAAFEHGPPPYRKPHDLRKAWKVSVLAAVIKHMSPNLERVRRLARQSKCLQDKMMAKETDTWSRVLNQEEARLNRLKISDDEDEDRDQEQARFTCFDQEPSLNTCFIVGQDQEPLGSMRKDKRVDQEFSSNDCFLVAQDQEPRKGKKADQEWSPNSCFLVDQEPLGNKRKGEFVEKEAMLSNVYTCQNSSCPSSDVSLGFVDKNLRTGHEIECLYGTPELVNQSSGGGSDGFVRSITTSDDDYSASSKAEDTRDYHNQDGNWLDYLWFERLHDLNFSDQGFEDQTSTVDLNQLPDHSDSNQTMNEDDISLWDMGCEDKDIYMSQD.

Disordered regions lie at residues 1-23 and 61-96; these read MVEV…DLEE and NLNS…RKKM. The span at 64-82 shows a compositional bias: low complexity; sequence SVISSPSSSTSASSSSSSS. Residues 270-311 adopt a coiled-coil conformation; that stretch reads ERVRRLARQSKCLQDKMMAKETDTWSRVLNQEEARLNRLKIS.

It belongs to the EIN3 family.

The protein localises to the nucleus. Putative transcription factor that may be involved in the ethylene response pathway. The chain is ETHYLENE INSENSITIVE 3-like 5 protein (EIL5) from Arabidopsis thaliana (Mouse-ear cress).